The sequence spans 256 residues: DNA repair protein RecO (256 aa).

Belongs to the RecO family.

In terms of biological role, involved in DNA repair and RecF pathway recombination. This Rhizobium etli (strain ATCC 51251 / DSM 11541 / JCM 21823 / NBRC 15573 / CFN 42) protein is DNA repair protein RecO.